A 310-amino-acid chain; its full sequence is Zinc-finger homeodomain protein 3 (310 aa).

Residues 1 to 64 (MEIASQEDPI…GLGKNHDHSH (64 aa)) form a disordered region. Residues 39–56 (LNITTSNPLLVSSNSNGL) are compositionally biased toward polar residues. The segment at 87 to 136 (YKECLKNHAATMGGNAIDGCGEFMPSGEEGSIEALTCSVCNCHRNFHRRE) adopts a ZF-HD dimerization-type; degenerate zinc-finger fold. 2 disordered regions span residues 184-220 (TAGS…YGHN) and 281-310 (LSKK…STNP). The span at 190 to 199 (ESEDLMEEEG) shows a compositional bias: acidic residues. The segment at residues 222 to 285 (KKRFRTKFTQ…NNKQNLSKKS (64 aa)) is a DNA-binding region (homeobox). Residues 281–291 (LSKKSNNVSNN) are compositionally biased toward low complexity. A compositionally biased stretch (polar residues) spans 292 to 310 (VDLSAGNNDITENLASTNP).

Homo- and heterodimer with other ZFHD proteins. Interacts with MIF2 and MIF3; these interactions prevent nuclear localization and DNA-binding to inhibit transcription regulation activity. Binds to ZHD1, ZHD2 and ZHD11. Interacts with HIPP30. Interacts with KIN10, KIN11 and FLZ8. In terms of tissue distribution, mostly expressed in flowers and inflorescence.

It localises to the nucleus. In terms of biological role, putative transcription factor. This is Zinc-finger homeodomain protein 3 (ZHD3) from Arabidopsis thaliana (Mouse-ear cress).